The primary structure comprises 297 residues: GTP-binding protein REM 1 (297 aa).

The span at 1-10 (MTLNTQQEAK) shows a compositional bias: polar residues. The disordered stretch occupies residues 1-73 (MTLNTQQEAK…DGWSSESSDS (73 aa)). At Ser51 the chain carries Phosphoserine. Low complexity predominate over residues 64–73 (DGWSSESSDS). GTP-binding positions include 87 to 94 (GDPGVGKT) and 194 to 197 (NKAD). Positions 267–286 (ARRFLARLTARSARRRALKA) are calmodulin-binding.

Belongs to the small GTPase superfamily. RGK family. In terms of assembly, in vitro, interacts with calmodulin in a calcium-dependent manner. Interacts 14-3-3 family members including YWHAE, YWHAH, YWHAQ, YWHAZ in a phosphorylation-dependent manner. High expression in cardiac muscle. Moderate expression in lung, skeletal muscle and kidney. Low levels in spleen and brain.

Its function is as follows. Promotes endothelial cell sprouting and actin cytoskeletal reorganization. May be involved in angiogenesis. May function in Ca(2+) signaling. This Mus musculus (Mouse) protein is GTP-binding protein REM 1 (Rem1).